Here is a 324-residue protein sequence, read N- to C-terminus: Probable uridine nucleosidase 1 (324 aa).

H248 is a catalytic residue.

It belongs to the IUNH family.

It localises to the cytoplasm. It carries out the reaction uridine + H2O = D-ribose + uracil. Involved in pyrimidine breakdown. This is Probable uridine nucleosidase 1 (URH1) from Oryza sativa subsp. japonica (Rice).